The chain runs to 63 residues: Large ribosomal subunit protein bL28 (63 aa).

This sequence belongs to the bacterial ribosomal protein bL28 family.

The chain is Large ribosomal subunit protein bL28 from Geobacter metallireducens (strain ATCC 53774 / DSM 7210 / GS-15).